The primary structure comprises 630 residues: Probable potassium transport system protein Kup (630 aa).

Transmembrane regions (helical) follow at residues 17–37 (LAIAAIGVVFGDIGTSPLYSL), 51–71 (PSAILGVISLLFWAIILVVGI), 105–125 (ITGLMMALGIFGACMFYGDAV), 144–164 (PQLSHLVLPITIVILIALFWI), 175–195 (LFGPIMVIWFVTIAALGVYHI), 218–238 (VLLAYVVLGSVVLVLTGAEAL), 255–275 (YVLVMPSLVLNYFGQGALLLL), 283–303 (PFFLLAPQWAALPLVVLSTVA), 344–364 (IYVPVVNWLLLFVILCIVIGF), 374–394 (YGIAVTATMVITTILAAVVMV), 402–422 (LLVAMIIGVFLVIDLGFFGAN), and 428–448 (QGGWLPLGIGALLFFLLMTWY).

The protein belongs to the HAK/KUP transporter (TC 2.A.72) family.

It localises to the cell inner membrane. It carries out the reaction K(+)(in) + H(+)(in) = K(+)(out) + H(+)(out). Its function is as follows. Transport of potassium into the cell. Likely operates as a K(+):H(+) symporter. In Burkholderia thailandensis (strain ATCC 700388 / DSM 13276 / CCUG 48851 / CIP 106301 / E264), this protein is Probable potassium transport system protein Kup.